We begin with the raw amino-acid sequence, 156 residues long: Putative pre-16S rRNA nuclease (156 aa).

It belongs to the YqgF nuclease family.

The protein localises to the cytoplasm. Its function is as follows. Could be a nuclease involved in processing of the 5'-end of pre-16S rRNA. In Albidiferax ferrireducens (strain ATCC BAA-621 / DSM 15236 / T118) (Rhodoferax ferrireducens), this protein is Putative pre-16S rRNA nuclease.